Consider the following 590-residue polypeptide: Multidrug resistance ABC transporter ATP-binding and permease protein (590 aa).

The next 6 helical transmembrane spans lie at 35–55 (YLFF…QLQV), 79–99 (IALY…LGIF), 150–170 (IPQA…MLQM), 176–196 (LAMI…MTFG), 261–281 (VMML…IYLI), and 292–312 (LGMM…ATFF). Residues 38-317 (FVIGIVAGII…VATFFTELAK (280 aa)) form the ABC transmembrane type-1 domain. Positions 349 to 584 (LSAHHVDFAY…HPLYAKYVSE (236 aa)) constitute an ABC transporter domain. 382–389 (GPSGGGKS) contacts ATP.

This sequence belongs to the ABC transporter superfamily. Multidrug exporter LmrA (TC 3.A.1.117.1) family. Homodimer.

The protein localises to the cell membrane. The enzyme catalyses ATP + H2O + xenobioticSide 1 = ADP + phosphate + xenobioticSide 2.. Its function is as follows. Efflux transporter for a variety of amphiphilic cationic compounds, including antibiotics. The protein is Multidrug resistance ABC transporter ATP-binding and permease protein (lmrA) of Lactococcus lactis subsp. cremoris (strain MG1363).